Consider the following 362-residue polypeptide: Endolytic peptidoglycan transglycosylase RlpA (362 aa).

The N-terminal stretch at 1–17 (MRKQWLGICIAAGMLAA) is a signal peptide. Residue cysteine 18 is the site of N-palmitoyl cysteine attachment. Cysteine 18 carries the S-diacylglycerol cysteine lipid modification. The tract at residues 198-276 (PDLSGGAGTS…PSTTPATSPA (79 aa)) is disordered. Residues 262–276 (PVVTAPSTTPATSPA) are compositionally biased toward low complexity. Positions 285-361 (QSASGNFMVQ…AQLQSFITTA (77 aa)) constitute an SPOR domain.

The protein belongs to the RlpA family.

It localises to the cell membrane. In terms of biological role, lytic transglycosylase with a strong preference for naked glycan strands that lack stem peptides. The sequence is that of Endolytic peptidoglycan transglycosylase RlpA from Escherichia coli O157:H7.